A 580-amino-acid chain; its full sequence is uncharacterized protein (580 aa).

This is an uncharacterized protein from Methanocaldococcus jannaschii (strain ATCC 43067 / DSM 2661 / JAL-1 / JCM 10045 / NBRC 100440) (Methanococcus jannaschii).